The sequence spans 114 residues: MGELNKTKCVSCSEGLPPLAERESEELLKEIPEWVIVSEDGVSRLVRTFTFENFREAMAFAGSVGELAESEQHHPKLVTEWGKVRVEWWTHAVHGLHMNDFVMAARTDELFQEL.

It belongs to the pterin-4-alpha-carbinolamine dehydratase family.

It catalyses the reaction (4aS,6R)-4a-hydroxy-L-erythro-5,6,7,8-tetrahydrobiopterin = (6R)-L-erythro-6,7-dihydrobiopterin + H2O. This chain is Putative pterin-4-alpha-carbinolamine dehydratase, found in Chlorobium luteolum (strain DSM 273 / BCRC 81028 / 2530) (Pelodictyon luteolum).